Reading from the N-terminus, the 167-residue chain is Ion-translocating oxidoreductase complex subunit B (167 aa).

Positions 1–22 (MITLIIFSFLSFLLGIILSFTA) are hydrophobic. In terms of domain architecture, 4Fe-4S spans 28–87 (QEDPIVEIVNELLPQSQCAQCGYSGCYPYAKAIVENSEKINKCIPGGTDLISAISSVLSI). [4Fe-4S] cluster-binding residues include Cys45, Cys48, Cys53, Cys70, Cys113, Cys116, Cys119, Cys123, Cys143, Cys146, Cys149, and Cys153. 2 consecutive 4Fe-4S ferredoxin-type domains span residues 104 to 133 (NTVL…GAPN) and 134 to 163 (FIHT…IKKE).

It belongs to the 4Fe4S bacterial-type ferredoxin family. RnfB subfamily. As to quaternary structure, the complex is composed of six subunits: RnfA, RnfB, RnfC, RnfD, RnfE and RnfG. The cofactor is [4Fe-4S] cluster.

It localises to the cell inner membrane. Functionally, part of a membrane-bound complex that couples electron transfer with translocation of ions across the membrane. This Buchnera aphidicola subsp. Acyrthosiphon pisum (strain Tuc7) protein is Ion-translocating oxidoreductase complex subunit B.